We begin with the raw amino-acid sequence, 380 residues long: Aprataxin (380 aa).

The region spanning 36 to 85 is the FHA-like domain; the sequence is PVIIGRTPELGITDKLCSRSQLELTSNCYKRYVLVKRLGANTSQINGIDI. The segment at 176 to 207 is disordered; that stretch reads VYAFDSPSPMSSRCEKKAESNKRAPTHKHWSQ. Over residues 188-197 the composition is skewed to basic and acidic residues; sequence RCEKKAESNK. The 107-residue stretch at 206 to 312 folds into the HIT domain; that stretch reads SQGLKASMED…ISQDFQSSSF (107 aa). Interaction with DNA substrate stretches follow at residues 231–235 and 294–295; these read DKYPK and SM. The short motif at 297-301 is the Histidine triad motif element; it reads QMHMH. The active-site Tele-AMP-histidine intermediate is the His299. A C2H2-type; atypical zinc finger spans residues 356–378; sequence LKCHRCKKPQKNIPTLKKHIDSC.

Its subcellular location is the nucleus. It localises to the nucleoplasm. It is found in the nucleolus. The enzyme catalyses a 5'-end adenosine-5'-diphospho-5'-2'-deoxyribonucleoside-DNA + H2O = a 5'-end 5'-phospho-2'-deoxyribonucleoside-DNA + AMP + 2 H(+). It carries out the reaction a 5'-end adenosine-5'-diphospho-5'-ribonucleoside-2'-deoxyribonucleotide-DNA + H2O = a 5'-end 5'-phospho-ribonucleoside-2'-deoxyribonucleotide-DNA + AMP + 2 H(+). The catalysed reaction is a 3'-end 2'-deoxyribonucleotide-3'-diphospho-5'-guanosine-DNA + H2O = a 3'-end 2'-deoxyribonucleotide 3'-phosphate-DNA + GMP + 2 H(+). In terms of biological role, DNA-binding protein involved in single-strand DNA break repair, double-strand DNA break repair and base excision repair. Resolves abortive DNA ligation intermediates formed either at base excision sites, or when DNA ligases attempt to repair non-ligatable breaks induced by reactive oxygen species. Catalyzes the release of adenylate groups covalently linked to 5'-phosphate termini, resulting in the production of 5'-phosphate termini that can be efficiently rejoined. Also able to hydrolyze adenosine 5'-monophosphoramidate (AMP-NH(2)) and diadenosine tetraphosphate (AppppA), but with lower catalytic activity. Likewise, catalyzes the release of 3'-linked guanosine (DNAppG) and inosine (DNAppI) from DNA, but has higher specific activity with 5'-linked adenosine (AppDNA). This is Aprataxin (APTX) from Ciona intestinalis (Transparent sea squirt).